The primary structure comprises 583 residues: Putative rhophilin-2-like protein RHPN2P1 (583 aa).

The BRO1 domain maps to 26–375; the sequence is PLIPLGLKET…RLTYAQHQED (350 aa). One can recognise a PDZ domain in the interval 412-490; the sequence is RSNRFTAEEG…DEIEMKVVSL (79 aa).

The chain is Putative rhophilin-2-like protein RHPN2P1 (RHPN2P1) from Homo sapiens (Human).